A 263-amino-acid polypeptide reads, in one-letter code: Hydroxyethylthiazole kinase (263 aa).

Methionine 39 contributes to the substrate binding site. Lysine 115 and threonine 160 together coordinate ATP. Glycine 187 is a binding site for substrate.

Belongs to the Thz kinase family. The cofactor is Mg(2+).

The enzyme catalyses 5-(2-hydroxyethyl)-4-methylthiazole + ATP = 4-methyl-5-(2-phosphooxyethyl)-thiazole + ADP + H(+). Its pathway is cofactor biosynthesis; thiamine diphosphate biosynthesis; 4-methyl-5-(2-phosphoethyl)-thiazole from 5-(2-hydroxyethyl)-4-methylthiazole: step 1/1. Functionally, catalyzes the phosphorylation of the hydroxyl group of 4-methyl-5-beta-hydroxyethylthiazole (THZ). The chain is Hydroxyethylthiazole kinase from Staphylococcus aureus (strain JH9).